Reading from the N-terminus, the 335-residue chain is CTD kinase subunit beta (335 aa).

Cyclin N-terminal domains are found at residues 26 to 151 (ILST…CFDF) and 158 to 241 (NYMV…LYMH). The interval 269–293 (KNSGRPQKPPQIDPHSSSLADEYRE) is disordered.

This sequence belongs to the cyclin family. In terms of assembly, CTDK-I consists of three subunits, ctk1/lsk1, ctk2/lsc1 and ctk3 (also called alpha, beta and gamma). Interacts with ctk1/lsk1. This interaction is dependent on ctk1/lsk1 kinase activity.

It is found in the cytoplasm. It localises to the nucleus. Cyclin subunit of the CTDK-I complex, which hyperphosphorylates the C-terminal heptapeptide repeat domain (CTD) of the largest RNA polymerase II subunit. As part of the CTDK-I complex, involved in RNA polymerase II transcriptional elongation and pre-mRNA 3'-end processing. Together with ctk3, required for ctk1/lsk1 CTD kinase activation. Together with ctk1/lsk1, required for the regulation of cytokinesis by phosphorylating 'Ser-2' residues found in the heptad repeats of the CTD. The chain is CTD kinase subunit beta (lsc1) from Schizosaccharomyces pombe (strain 972 / ATCC 24843) (Fission yeast).